The primary structure comprises 666 residues: tRNA 5-methylaminomethyl-2-thiouridine biosynthesis bifunctional protein MnmC (666 aa).

Residues 1 to 245 (MKQYAIQPAT…KREMLCGVME (245 aa)) form a tRNA (mnm(5)s(2)U34)-methyltransferase region. The FAD-dependent cmnm(5)s(2)U34 oxidoreductase stretch occupies residues 270-666 (IGGGIASALL…RKLLKGKAVK (397 aa)).

The protein in the N-terminal section; belongs to the methyltransferase superfamily. tRNA (mnm(5)s(2)U34)-methyltransferase family. This sequence in the C-terminal section; belongs to the DAO family. FAD serves as cofactor.

Its subcellular location is the cytoplasm. It carries out the reaction 5-aminomethyl-2-thiouridine(34) in tRNA + S-adenosyl-L-methionine = 5-methylaminomethyl-2-thiouridine(34) in tRNA + S-adenosyl-L-homocysteine + H(+). Catalyzes the last two steps in the biosynthesis of 5-methylaminomethyl-2-thiouridine (mnm(5)s(2)U) at the wobble position (U34) in tRNA. Catalyzes the FAD-dependent demodification of cmnm(5)s(2)U34 to nm(5)s(2)U34, followed by the transfer of a methyl group from S-adenosyl-L-methionine to nm(5)s(2)U34, to form mnm(5)s(2)U34. This is tRNA 5-methylaminomethyl-2-thiouridine biosynthesis bifunctional protein MnmC from Salmonella arizonae (strain ATCC BAA-731 / CDC346-86 / RSK2980).